Here is a 146-residue protein sequence, read N- to C-terminus: uncharacterized protein (146 aa).

This is an uncharacterized protein from Escherichia coli O157:H7.